We begin with the raw amino-acid sequence, 305 residues long: Axin interactor, dorsalization-associated protein A (305 aa).

The segment at glycine 153–asparagine 220 is axin-binding. Residues leucine 156–leucine 303 form the C2 Aida-type domain.

This sequence belongs to the AIDA family.

In terms of biological role, acts as a ventralizing factor during embryogenesis. Inhibits axin-mediated JNK activation by binding axin and disrupting axin homodimerization. This in turn antagonizes a Wnt/beta-catenin-independent dorsalization pathway activated by axin/JNK-signaling. The chain is Axin interactor, dorsalization-associated protein A (aida-a) from Xenopus laevis (African clawed frog).